Reading from the N-terminus, the 132-residue chain is MSTVDIDSLVEQICSLDLCKAAELVDKMEQKLGFPKGGLLTAVPAAGGGQAESSAAEEKTDFSVIFDSYAADKKISVIKAVRECTNLGLKEAKEFVEKEGAKELIEGKKYKKEEAEEIKKKLEDAGAKVIIK.

Belongs to the bacterial ribosomal protein bL12 family. Homodimer. Part of the ribosomal stalk of the 50S ribosomal subunit. Forms a multimeric L10(L12)X complex, where L10 forms an elongated spine to which 2 to 4 L12 dimers bind in a sequential fashion. Binds GTP-bound translation factors.

In terms of biological role, forms part of the ribosomal stalk which helps the ribosome interact with GTP-bound translation factors. Is thus essential for accurate translation. In Ehrlichia canis (strain Jake), this protein is Large ribosomal subunit protein bL12.